The following is a 354-amino-acid chain: Small ribosomal subunit protein uS2 (354 aa).

Belongs to the universal ribosomal protein uS2 family.

This is Small ribosomal subunit protein uS2 from Methylorubrum populi (strain ATCC BAA-705 / NCIMB 13946 / BJ001) (Methylobacterium populi).